The primary structure comprises 108 residues: Iron-sulfur cluster assembly protein CyaY (108 aa).

Belongs to the frataxin family.

Functionally, involved in iron-sulfur (Fe-S) cluster assembly. May act as a regulator of Fe-S biogenesis. The protein is Iron-sulfur cluster assembly protein CyaY of Burkholderia vietnamiensis (strain G4 / LMG 22486) (Burkholderia cepacia (strain R1808)).